We begin with the raw amino-acid sequence, 208 residues long: AN1-type zinc finger protein 6 (208 aa).

The A20-type zinc finger occupies 8 to 42 (SQVPMLCSTGCGFYGNPRTNGMCSVCYKEHLQRQN). Residues Cys-14, Cys-18, Cys-30, and Cys-33 each contribute to the Zn(2+) site. Residues 41–110 (QNSSNGRISP…ASSQVDSTSV (70 aa)) form a disordered region. Residue Ser-49 is modified to Phosphoserine. A compositionally biased stretch (polar residues) spans 54–68 (SVTSLSESLPVQCTD). The segment covering 83 to 94 (SSVQPSPVSNQS) has biased composition (low complexity). A compositionally biased stretch (polar residues) spans 95 to 110 (LLSESVASSQVDSTSV). Residues 143–189 (KQKKNRCFMCRKKVGLTGFECRCGNVYCGVHRYSDVHNCSYNYKADA) form an AN1-type zinc finger. Residues Cys-149, Cys-152, Cys-163, Cys-165, Cys-170, His-173, His-179, and Cys-181 each coordinate Zn(2+). An N6-acetyllysine modification is found at Lys-204.

In terms of assembly, interacts with PKN1.

In Bos taurus (Bovine), this protein is AN1-type zinc finger protein 6 (ZFAND6).